The following is a 344-amino-acid chain: N-acetyl-gamma-glutamyl-phosphate reductase (344 aa).

Cys-150 is a catalytic residue.

This sequence belongs to the NAGSA dehydrogenase family. Type 1 subfamily.

The protein resides in the cytoplasm. The catalysed reaction is N-acetyl-L-glutamate 5-semialdehyde + phosphate + NADP(+) = N-acetyl-L-glutamyl 5-phosphate + NADPH + H(+). Its pathway is amino-acid biosynthesis; L-arginine biosynthesis; N(2)-acetyl-L-ornithine from L-glutamate: step 3/4. Functionally, catalyzes the NADPH-dependent reduction of N-acetyl-5-glutamyl phosphate to yield N-acetyl-L-glutamate 5-semialdehyde. This Ectopseudomonas mendocina (strain ymp) (Pseudomonas mendocina) protein is N-acetyl-gamma-glutamyl-phosphate reductase.